We begin with the raw amino-acid sequence, 351 residues long: Tetraacyldisaccharide 4'-kinase (351 aa).

47–54 is an ATP binding site; that stretch reads KAGGTGKT.

Belongs to the LpxK family.

It catalyses the reaction a lipid A disaccharide + ATP = a lipid IVA + ADP + H(+). Its pathway is glycolipid biosynthesis; lipid IV(A) biosynthesis; lipid IV(A) from (3R)-3-hydroxytetradecanoyl-[acyl-carrier-protein] and UDP-N-acetyl-alpha-D-glucosamine: step 6/6. Transfers the gamma-phosphate of ATP to the 4'-position of a tetraacyldisaccharide 1-phosphate intermediate (termed DS-1-P) to form tetraacyldisaccharide 1,4'-bis-phosphate (lipid IVA). This is Tetraacyldisaccharide 4'-kinase from Cytophaga hutchinsonii (strain ATCC 33406 / DSM 1761 / CIP 103989 / NBRC 15051 / NCIMB 9469 / D465).